The primary structure comprises 132 residues: DNA-directed RNA polymerase subunit omega (132 aa).

A disordered region spans residues 100 to 119 (VSAEEEASHGTAGMSAEELE).

It belongs to the RNA polymerase subunit omega family. In terms of assembly, the RNAP catalytic core consists of 2 alpha, 1 beta, 1 beta' and 1 omega subunit. When a sigma factor is associated with the core the holoenzyme is formed, which can initiate transcription.

It catalyses the reaction RNA(n) + a ribonucleoside 5'-triphosphate = RNA(n+1) + diphosphate. In terms of biological role, promotes RNA polymerase assembly. Latches the N- and C-terminal regions of the beta' subunit thereby facilitating its interaction with the beta and alpha subunits. The chain is DNA-directed RNA polymerase subunit omega from Gluconacetobacter diazotrophicus (strain ATCC 49037 / DSM 5601 / CCUG 37298 / CIP 103539 / LMG 7603 / PAl5).